Reading from the N-terminus, the 210-residue chain is Large ribosomal subunit protein uL4 (210 aa).

The disordered stretch occupies residues 46-89 (QGTASTLTRSEVRGGGRKPYKQKGTGRARQGSIRTPLRPGGGII). Residues 60 to 71 (GGRKPYKQKGTG) are compositionally biased toward basic residues.

Belongs to the universal ribosomal protein uL4 family. In terms of assembly, part of the 50S ribosomal subunit.

Its function is as follows. One of the primary rRNA binding proteins, this protein initially binds near the 5'-end of the 23S rRNA. It is important during the early stages of 50S assembly. It makes multiple contacts with different domains of the 23S rRNA in the assembled 50S subunit and ribosome. Functionally, forms part of the polypeptide exit tunnel. The chain is Large ribosomal subunit protein uL4 from Prochlorococcus marinus (strain MIT 9312).